Here is a 212-residue protein sequence, read N- to C-terminus: Small ribosomal subunit protein uS5 (212 aa).

Residues 48–111 (LDDEVLDINM…EVAKLNIIDV (64 aa)) form the S5 DRBM domain.

This sequence belongs to the universal ribosomal protein uS5 family. As to quaternary structure, part of the 30S ribosomal subunit. Contacts protein S4.

Functionally, with S4 and S12 plays an important role in translational accuracy. In Halobacterium salinarum (strain ATCC 700922 / JCM 11081 / NRC-1) (Halobacterium halobium), this protein is Small ribosomal subunit protein uS5.